Consider the following 273-residue polypeptide: Tyrosinase (273 aa).

The signal sequence occupies residues 1–18; that stretch reads MLLFTMGLLLAILQPSTG. N-linked (GlcNAc...) asparagine glycans are attached at residues N86, N111, and N161. Cu cation-binding residues include H180, H202, and H211. A glycan (N-linked (GlcNAc...) asparagine) is linked at N230.

The protein belongs to the tyrosinase family. Requires Cu(2+) as cofactor.

It is found in the melanosome membrane. The protein localises to the melanosome. It carries out the reaction 2 L-dopa + O2 = 2 L-dopaquinone + 2 H2O. It catalyses the reaction L-tyrosine + O2 = L-dopaquinone + H2O. In terms of biological role, this is a copper-containing oxidase that functions in the formation of pigments such as melanins and other polyphenolic compounds. Catalyzes the initial and rate limiting step in the cascade of reactions leading to melanin production from tyrosine. In addition to hydroxylating tyrosine to DOPA (3,4-dihydroxyphenylalanine), also catalyzes the oxidation of DOPA to DOPA-quinone, and possibly the oxidation of DHI (5,6-dihydroxyindole) to indole-5,6 quinone. The protein is Tyrosinase (TYR) of Coturnix japonica (Japanese quail).